Reading from the N-terminus, the 62-residue chain is Large ribosomal subunit protein bL33 (62 aa).

It belongs to the bacterial ribosomal protein bL33 family.

In Parabacteroides distasonis (strain ATCC 8503 / DSM 20701 / CIP 104284 / JCM 5825 / NCTC 11152), this protein is Large ribosomal subunit protein bL33.